Here is a 194-residue protein sequence, read N- to C-terminus: PSVNARPCSSPLVCPAKGEKFFGVGSTSRIRRLPPHLAWCSIDWEQLCLLNLLGSGGFGSVYKATYHGATVAVKQVNRCSKNHLASRQSFWAELNVVRLDHNNVVRIVAASTCTPASQDSLGTIIMEYAGNCTLHHVIYGTGYLTGNSNDDLKCDHGFLSTAQAIIYSCDIVAGLMFLHSQLIVHLDLKPANIF.

The Protein kinase domain maps to 47–194 (LCLLNLLGSG…HLDLKPANIF (148 aa)). ATP contacts are provided by residues 53–61 (LGSGGFGSV) and K74. D187 serves as the catalytic Proton acceptor.

It belongs to the protein kinase superfamily. Ser/Thr protein kinase family.

It catalyses the reaction L-seryl-[protein] + ATP = O-phospho-L-seryl-[protein] + ADP + H(+). The catalysed reaction is L-threonyl-[protein] + ATP = O-phospho-L-threonyl-[protein] + ADP + H(+). This chain is Serine/threonine-protein kinase mos (MOS), found in Dendroaspis angusticeps (Eastern green mamba).